Consider the following 189-residue polypeptide: Cold-regulated 413 plasma membrane protein 3 (189 aa).

Topologically, residues 1 to 24 (MENIEYLNEIQAVAGKLIHSYGVP) are extracellular. A helical transmembrane segment spans residues 25–45 (VMITLFLRWLASIVAVFLMIL). The Cytoplasmic segment spans residues 46 to 55 (DQTKWKYSNN). A helical membrane pass occupies residues 56-76 (IMASLLAPYLFSSLPIVIFQV). The Extracellular portion of the chain corresponds to 77–79 (LRN). The helical transmembrane segment at 80–100 (GVGKWIALLTVILRLFLPNHF) threads the bilayer. Topologically, residues 101–104 (HESL) are cytoplasmic. The chain crosses the membrane as a helical span at residues 105-125 (EIPGATILLIVVTPSDIGAIF). At 126–168 (RDDLRYTGGDVCLLTSFYLINKHTKACGGIKNSFTQKDKVTYS) the chain is on the extracellular side. Residues 169-189 (ICLWILFVYPILSSFAALFYL) form a helical membrane-spanning segment.

The protein belongs to the Cold-regulated 413 protein family.

The protein resides in the cell membrane. In Arabidopsis thaliana (Mouse-ear cress), this protein is Cold-regulated 413 plasma membrane protein 3.